The sequence spans 574 residues: MLSKFYEDIDSKLENAMLSQIESSTITCDGKSLNTLPTPKQEDVEFGVPLQPEDTQDLQRKLKPRHMQMIAIGGCVGTGLFVGSGNALADGGPASILIAFAVIGTYVLFTTSALAELSAIYPVSGSFYTYFSKFIDPAWGFAVGIQYWLSFAVTVPLELTVAPLIINFWNASGPVSIWISVFYVIIIAINIWGTEGYGEVEFFLSIMKVISVIGFVILSIIIAAGGVPTDDRGVIGVSYWKQPLVFNNGFKGLCAVSVIAIFSLSGTELVGLAASEAKNPQKTVPAAVKQIFWRIFLFYIVALFMLTLVVPSDLPGLRTSDNSNVLISPFVIAIQLANIRALPSIMNVVILLSTLSVGNSASYAASRALFALAKNGYAPKIFNKTNKRGHPIYAIAVTLLFGSIAYFTEAGVGGALFGWLLSICGLSTTFIWGSICLAHIQFRRAWKIQNRKLEDLPYRSIFGVYGSIYGVAMTILALIAQFYVAVFPIGKKPNPVDFFQAYMAAPILIISFVAWKFFRRTSFVRIEKIDLSEGAHGEQKQNLEPVINIPVEEIDFPMKVATKESMKNVEKNAL.

9 helical membrane-spanning segments follow: residues M69–A89, A94–L114, G173–G193, F202–I222, I291–P311, P391–G411, V412–W432, G470–G490, and F498–F518.

This sequence belongs to the amino acid-polyamine-organocation (APC) superfamily.

Its subcellular location is the membrane. The chain is Probable amino-acid permease meu22 (meu22) from Schizosaccharomyces pombe (strain 972 / ATCC 24843) (Fission yeast).